The chain runs to 415 residues: Plasminogen activator inhibitor 2 (415 aa).

A disulfide bond links Cys-5 and Cys-405. N-linked (GlcNAc...) asparagine glycosylation is found at Asn-75, Asn-115, and Asn-339.

This sequence belongs to the serpin family. Ov-serpin subfamily. Interacts with PSMB1. The signal sequence is not cleaved.

It localises to the cytoplasm. Its subcellular location is the secreted. It is found in the extracellular space. Its function is as follows. Inhibits urokinase-type plasminogen activator. The monocyte derived PAI-2 is distinct from the endothelial cell-derived PAI-1. This chain is Plasminogen activator inhibitor 2 (SERPINB2), found in Homo sapiens (Human).